A 166-amino-acid chain; its full sequence is Ribonuclease H (166 aa).

An RNase H type-1 domain is found at 5–147 (PRKRVALFTD…VDREARRQAQ (143 aa)). Residues Asp14, Glu52, Asp74, and Asp139 each contribute to the Mg(2+) site. Positions 128 to 166 (GHTGHPENERVDREARRQAQSQAKTPCPPRAPTLFHEEA) are disordered. Residues 131 to 144 (GHPENERVDREARR) show a composition bias toward basic and acidic residues.

It belongs to the RNase H family. Monomer. Mg(2+) serves as cofactor.

The catalysed reaction is Endonucleolytic cleavage to 5'-phosphomonoester.. Endonuclease that specifically degrades the RNA of RNA-DNA hybrids. The polypeptide is Ribonuclease H (rnhA) (Thermus thermophilus (strain ATCC 27634 / DSM 579 / HB8)).